Reading from the N-terminus, the 411-residue chain is Kelch domain-containing protein 10 (411 aa).

6 Kelch repeats span residues 72-133 (NLYV…LHGH), 135-186 (LLVF…IIHG), 187-239 (FLYV…HDGQ), 240-288 (RIYV…RRCH), 296-342 (EVFI…AVTP), and 345-388 (CMYI…YFPH).

It belongs to the KLHDC10 family. As to quaternary structure, component of a CRL2 E3 ubiquitin-protein ligase complex, also named ECS (Elongin BC-CUL2/5-SOCS-box protein) complex, composed of CUL2, Elongin BC (ELOB and ELOC), RBX1 and substrate-specific adapter KLHDC10.

It functions in the pathway protein modification; protein ubiquitination. Its function is as follows. Substrate-recognition component of a Cul2-RING (CRL2) E3 ubiquitin-protein ligase complex of the DesCEND (destruction via C-end degrons) pathway, which recognizes a C-degron located at the extreme C terminus of target proteins, leading to their ubiquitination and degradation. The C-degron recognized by the DesCEND pathway is usually a motif of less than ten residues and can be present in full-length proteins, truncated proteins or proteolytically cleaved forms. The CRL2(KLHDC10) complex specifically recognizes proteins with a proline-glycine (Pro-Gly) or an alanine tail (CAT tail) at the C-terminus, leading to their ubiquitination and degradation. The CRL2(KLHDC10) complex is involved in the ribosome-associated quality control (RQC) pathway, which mediates the extraction of incompletely synthesized nascent chains from stalled ribosomes: CRL2(KLHDC10) acts downstream of NEMF and recognizes CAT tails associated with stalled nascent chains, leading to their ubiquitination and degradation. This chain is Kelch domain-containing protein 10, found in Xenopus tropicalis (Western clawed frog).